A 1462-amino-acid polypeptide reads, in one-letter code: Trifunctional nucleotide phosphoesterase protein YfkN (1462 aa).

A signal peptide spans 1–35 (MRIQKRRTHVENILRILLPPIMILSLILPTPPIHA). Residues 36 to 623 (EESAAPQVHL…GTNLTFESSL (588 aa)) form a 2',3'-cyclic nucleotide 2'-phosphodiesterase/3'-nucleotidase region. Asp52, His54, Asp97, Asn141, His249, His282, and His284 together coordinate a divalent metal cation. Residues Tyr458 and 561 to 567 (YRASGGG) contribute to the a ribonucleoside 3'-phosphate site. A 5'-nucleotidase region spans residues 624–1427 (LAKPFADKAD…GPAGGLLPDT (804 aa)). 7 residues coordinate a divalent metal cation: Asp676, His678, Asp708, Asn740, His872, His895, and His897. A ribonucleoside 5'-phosphate-binding positions include Phe1047 and 1127 to 1133 (FVGAGGD). A disordered region spans residues 1350 to 1422 (ILNSGSNNKP…GSGTDGPAGG (73 aa)). Gly residues predominate over residues 1405–1421 (GSGGNGSGGSGTDGPAG). The LPXTG sorting signal motif lies at 1424–1428 (LPDTA). A Pentaglycyl murein peptidoglycan amidated threonine modification is found at Thr1427. Positions 1428-1462 (ATSMYSILLAGFLISALGTAMYLHQRRKQNRANQA) are cleaved as a propeptide — removed by sortase.

This sequence belongs to the 5'-nucleotidase family. The cofactor is a divalent metal cation.

The protein localises to the secreted. It localises to the cell wall. It catalyses the reaction a nucleoside 2',3'-cyclic phosphate + H2O = a nucleoside 3'-phosphate + H(+). It carries out the reaction a ribonucleoside 3'-phosphate + H2O = a ribonucleoside + phosphate. The enzyme catalyses a ribonucleoside 5'-phosphate + H2O = a ribonucleoside + phosphate. Its function is as follows. Catalyzes the release of inorganic phosphate from 2',3'-cyclic nucleotides through consecutive 2',3'-phosphodiesterase and 3'- (or 2') nucleotidase activities. Also possesses a 5'-nucleotidase activity. Does not catalyze the release of inorganic phosphate from 3',5'-cyclic nucleotides. Probably plays a role in the cellular reprocessing of nucleotides present in the medium, under conditions of phosphate shortage. The chain is Trifunctional nucleotide phosphoesterase protein YfkN (yfkN) from Bacillus subtilis (strain 168).